Here is a 112-residue protein sequence, read N- to C-terminus: uncharacterized protein (112 aa).

The N-terminal stretch at Met-1 to Ala-25 is a signal peptide.

This is an uncharacterized protein from Mycobacterium tuberculosis (strain CDC 1551 / Oshkosh).